The primary structure comprises 240 residues: tRNA1(Val) (adenine(37)-N6)-methyltransferase (240 aa).

The protein belongs to the methyltransferase superfamily. tRNA (adenine-N(6)-)-methyltransferase family.

It localises to the cytoplasm. It catalyses the reaction adenosine(37) in tRNA1(Val) + S-adenosyl-L-methionine = N(6)-methyladenosine(37) in tRNA1(Val) + S-adenosyl-L-homocysteine + H(+). Functionally, specifically methylates the adenine in position 37 of tRNA(1)(Val) (anticodon cmo5UAC). The protein is tRNA1(Val) (adenine(37)-N6)-methyltransferase of Christiangramia forsetii (strain DSM 17595 / CGMCC 1.15422 / KT0803) (Gramella forsetii).